Here is a 732-residue protein sequence, read N- to C-terminus: MKKTIFQQLFLSVCALTVALPCSAQSPETSGKEFTLEQLMPGGKEFYNFYPEYVVGLQWMGDNYVFIEGDDLVFNKANGKSAQTTRFSAADLNALMPEGCKFQTTDAFPSFRTLDAGRGLVVLFTQGGLVGFDMLARKVTYLFDTNEETASLDFSPVGDRVAYVRNHNLYIARGGKLGEGMSRAIAVTIDGTETLVYGQAVHQREFGIEKGTFWSPKGSCLAFYRMDQSMVKPTPIVDYHPLEAESKPLYYPMAGTPSHHVTVGIYHLATGKTVYLQTGEPKEKFLTNLSWSPDENILYVAEVNRAQNECKVNAYDAETGRFVRTLFVETDKHYVEPLHPLTFLPGSNNQFIWQSRRDGWNHLYLYDTTGRLIRQVTKGEWEVTNFAGFDPKGTRLYFESTEASPLERHFYCIDIKGGKTKDLTPESGMHRTQLSPDGSAIIDIFQSPTVPRKVTVTNIGKGSHTLLEAKNPDTGYAMPEIRTGTIMAADGQTPLYYKLTMPLHFDPAKKYPVIVYVYGGPHAQLVTKTWRSSVGGWDIYMAQKGYAVFTVDSRGSANRGAAFEQVIHRRLGQTEMADQMCGVDFLKSQSWVDADRIGVHGWSYGGFMTTNLMLTHGDVFKVGVAGGPVIDWNRYEIMYGERYFDAPQENPEGYDAANLLKRAGDLKGRLMLIHGAIDPVVVWQHSLLFLDACVKARTYPDYYVYPSHEHNVMGPDRVHLYETITRYFTDHL.

The first 24 residues, 1-24, serve as a signal peptide directing secretion; it reads MKKTIFQQLFLSVCALTVALPCSA. Active-site charge relay system residues include serine 603, aspartate 678, and histidine 710.

It belongs to the peptidase S9B family. In terms of processing, the N-terminus is blocked.

The catalysed reaction is Hydrolysis of Xaa-Xaa-Pro-|-Yaa- releasing the N-terminal tripeptide of a peptide with Pro as the third residue (position P1) and where Yaa is not proline.. Strongly inhibited by diisopropyl fluorophosphate and Pefabloc. Weakly inhibited by 3,4-dichloroisocumarin. Not inhibited by phenylmethylsulfonyl fluoride, leupeptin, antipain or prolinal. Activated by iodoacetamide. In terms of biological role, serine proteinase. Releases tripeptides from the free amino terminus of proteins. Has a requirement for Pro in the P1 position, but is inactivated by Pro in the P1' position. This Porphyromonas gingivalis (strain ATCC BAA-308 / W83) protein is Prolyl tripeptidyl peptidase.